The following is a 635-amino-acid chain: 1-deoxy-D-xylulose-5-phosphate synthase (635 aa).

Thiamine diphosphate-binding positions include His72 and 113–115; that span reads GHA. Residue Asp144 participates in Mg(2+) binding. Residues 145-146, Asn174, Tyr287, and Glu370 each bind thiamine diphosphate; that span reads GA. Asn174 contributes to the Mg(2+) binding site.

It belongs to the transketolase family. DXPS subfamily. Homodimer. Requires Mg(2+) as cofactor. Thiamine diphosphate is required as a cofactor.

It carries out the reaction D-glyceraldehyde 3-phosphate + pyruvate + H(+) = 1-deoxy-D-xylulose 5-phosphate + CO2. Its pathway is metabolic intermediate biosynthesis; 1-deoxy-D-xylulose 5-phosphate biosynthesis; 1-deoxy-D-xylulose 5-phosphate from D-glyceraldehyde 3-phosphate and pyruvate: step 1/1. In terms of biological role, catalyzes the acyloin condensation reaction between C atoms 2 and 3 of pyruvate and glyceraldehyde 3-phosphate to yield 1-deoxy-D-xylulose-5-phosphate (DXP). In Trichormus variabilis (strain ATCC 29413 / PCC 7937) (Anabaena variabilis), this protein is 1-deoxy-D-xylulose-5-phosphate synthase.